A 200-amino-acid chain; its full sequence is NADH-quinone oxidoreductase subunit B (200 aa).

[4Fe-4S] cluster-binding residues include Cys79, Cys80, Cys144, and Cys174.

This sequence belongs to the complex I 20 kDa subunit family. As to quaternary structure, NDH-1 is composed of 14 different subunits. Subunits NuoB, C, D, E, F, and G constitute the peripheral sector of the complex. It depends on [4Fe-4S] cluster as a cofactor.

Its subcellular location is the cell inner membrane. It catalyses the reaction a quinone + NADH + 5 H(+)(in) = a quinol + NAD(+) + 4 H(+)(out). NDH-1 shuttles electrons from NADH, via FMN and iron-sulfur (Fe-S) centers, to quinones in the respiratory chain. The immediate electron acceptor for the enzyme in this species is believed to be ubiquinone. Couples the redox reaction to proton translocation (for every two electrons transferred, four hydrogen ions are translocated across the cytoplasmic membrane), and thus conserves the redox energy in a proton gradient. The sequence is that of NADH-quinone oxidoreductase subunit B from Caulobacter vibrioides (strain NA1000 / CB15N) (Caulobacter crescentus).